The sequence spans 198 residues: MICOS complex subunit Mic26 (198 aa).

The signal sequence occupies residues 1–23 (MFKVIQRSVGPASLSLLTFRVYA). N-linked (GlcNAc...) asparagine glycosylation occurs at N63. Residues 108–128 (PGFFPRLGVIGFAGFVGLLFA) form a helical membrane-spanning segment.

This sequence belongs to the apolipoprotein O/MICOS complex subunit Mic27 family. In terms of assembly, component of the mitochondrial contact site and cristae organizing system (MICOS) complex, composed of at least MICOS10/MIC10, CHCHD3/MIC19, CHCHD6/MIC25, APOOL/MIC27, IMMT/MIC60, APOO/MIC23/MIC26 and MICOS13/MIC13. This complex was also known under the names MINOS or MitOS complex. The MICOS complex associates with mitochondrial outer membrane proteins SAMM50, MTX1 and MTX2 (together described as components of the mitochondrial outer membrane sorting assembly machinery (SAM) complex) and DNAJC11, mitochondrial inner membrane protein TMEM11 and with HSPA9. The MICOS and SAM complexes together with DNAJC11 are part of a large protein complex spanning both membranes termed the mitochondrial intermembrane space bridging (MIB) complex. Interacts with IMMT/MIC60. Interacts with MICOS10/MIC10 and APOOL/MIC27.

The protein resides in the mitochondrion inner membrane. It is found in the mitochondrion. It localises to the endoplasmic reticulum membrane. Its subcellular location is the golgi apparatus membrane. Component of the MICOS complex, a large protein complex of the mitochondrial inner membrane that plays crucial roles in the maintenance of crista junctions, inner membrane architecture, and formation of contact sites to the outer membrane. Plays a crucial role in crista junction formation and mitochondrial function. Can induce cardiac lipotoxicity by enhancing mitochondrial respiration and fatty acid metabolism in cardiac myoblasts. Promotes cholesterol efflux from macrophage cells. Detected in HDL, LDL and VLDL. Secreted by a microsomal triglyceride transfer protein (MTTP)-dependent mechanism, probably as a VLDL-associated protein that is subsequently transferred to HDL. The sequence is that of MICOS complex subunit Mic26 (Apoo) from Mus musculus (Mouse).